Here is an 81-residue protein sequence, read N- to C-terminus: MKVFFILIIFSFTLATCQGHCIGSIPLPEMEDGEDVPLRTCVDTHDEKKHLIVSTWKTANSFSCECRQDGMWCCKEYVAVA.

An N-terminal signal peptide occupies residues 1-19 (MKVFFILIIFSFTLATCQG). 3 disulfides stabilise this stretch: Cys21-Cys74, Cys41-Cys66, and Cys64-Cys73.

The protein belongs to the beta-microseminoprotein family.

Its subcellular location is the secreted. Shows an slight inhibitory effect toward the metalloproteinase brevilysin H6, but does not inhibit the metalloproteinases thermolysin, HR1A and HR1B. In Protobothrops flavoviridis (Habu), this protein is Small serum protein 4.